Consider the following 261-residue polypeptide: Immediate-early protein IE-0 (261 aa).

Residues 212–257 (CNVCKEISTDERFLKPKECCEYAICNACCVNMWKTATTHAKCPACR) form an RING-type zinc finger.

As to quaternary structure, interacts with proteins C42 and FP25. Interacts with host beta-tubulin. Interacts with Ac66 and vUb.

It is found in the host nucleus. The protein localises to the host cytoplasm. The protein resides in the virion. Its function is as follows. Putative viral E3 ligase that plays an essential regulatory role in both viral DNA replication and transcriptional transactivation. The role in transcription has been shown to include activation of gene expression from early viral promoters. Also promotes the efficient egress of nucleocapsids from the host nucleus. May act as an E3 ligase that promotes ubiquitination of nucleocapsids proteins by vUbi and subsequent viral egress for the host nucleus. The sequence is that of Immediate-early protein IE-0 (IE0) from Lepidoptera (butterflies and moths).